The sequence spans 153 residues: Insulin-like growth factor 1 (153 aa).

Residues 49–77 are b; sequence GPETLCGAELVDALQFVCGDRGFYFNKPT. 3 cysteine pairs are disulfide-bonded: Cys-54–Cys-96, Cys-66–Cys-109, and Cys-95–Cys-100. The interval 78-89 is c; that stretch reads GYGSSSRRAPQT. The segment at 90–110 is a; sequence GIVDECCFRSCDLRRLEMYCA. Positions 111–118 are d; sequence PLKPAKSA. Positions 119–153 are cleaved as a propeptide — e peptide; it reads RSVRAQRHTDMPKAQKEVHLKNASRGSAGNKNYRM. The disordered stretch occupies residues 120–153; sequence SVRAQRHTDMPKAQKEVHLKNASRGSAGNKNYRM. Residues 125 to 138 are compositionally biased toward basic and acidic residues; sequence RHTDMPKAQKEVHL. The span at 142 to 153 shows a compositional bias: polar residues; the sequence is SRGSAGNKNYRM.

This sequence belongs to the insulin family. As to quaternary structure, forms a ternary complex with IGFR1 and ITGAV:ITGB3. Forms a ternary complex with IGFR1 and ITGA6:ITGB4. Forms a ternary complex with IGFBP3 and ALS.

The protein resides in the secreted. In terms of biological role, the insulin-like growth factors, isolated from plasma, are structurally and functionally related to insulin but have a much higher growth-promoting activity. May be a physiological regulator of [1-14C]-2-deoxy-D-glucose (2DG) transport and glycogen synthesis in osteoblasts. Stimulates glucose transport in bone-derived osteoblastic (PyMS) cells and is effective at much lower concentrations than insulin, not only regarding glycogen and DNA synthesis but also with regard to enhancing glucose uptake. May play a role in synapse maturation. Ca(2+)-dependent exocytosis of IGF1 is required for sensory perception of smell in the olfactory bulb. Acts as a ligand for IGF1R. Binds to the alpha subunit of IGF1R, leading to the activation of the intrinsic tyrosine kinase activity which autophosphorylates tyrosine residues in the beta subunit thus initiating a cascade of down-stream signaling events leading to activation of the PI3K-AKT/PKB and the Ras-MAPK pathways. Binds to integrins ITGAV:ITGB3 and ITGA6:ITGB4. Its binding to integrins and subsequent ternary complex formation with integrins and IGFR1 are essential for IGF1 signaling. Induces the phosphorylation and activation of IGFR1, MAPK3/ERK1, MAPK1/ERK2 and AKT1. As part of the MAPK/ERK signaling pathway, acts as a negative regulator of apoptosis in cardiomyocytes via promotion of STUB1/CHIP-mediated ubiquitination and degradation of ICER-type isoforms of CREM. The chain is Insulin-like growth factor 1 from Rhinopithecus roxellana (Golden snub-nosed monkey).